Reading from the N-terminus, the 208-residue chain is Small ribosomal subunit protein uS4 (208 aa).

The 66-residue stretch at 98-163 (QRLDNVVYRM…NPQITRAIEL (66 aa)) folds into the S4 RNA-binding domain.

The protein belongs to the universal ribosomal protein uS4 family. In terms of assembly, part of the 30S ribosomal subunit. Contacts protein S5. The interaction surface between S4 and S5 is involved in control of translational fidelity.

In terms of biological role, one of the primary rRNA binding proteins, it binds directly to 16S rRNA where it nucleates assembly of the body of the 30S subunit. With S5 and S12 plays an important role in translational accuracy. This is Small ribosomal subunit protein uS4 from Campylobacter jejuni subsp. jejuni serotype O:6 (strain 81116 / NCTC 11828).